The following is a 267-amino-acid chain: Small ribosomal subunit protein uS3 (267 aa).

Residues 39–114 enclose the KH type-2 domain; sequence IRKYLETNLK…RVNINIVEIR (76 aa). Over residues 229 to 248 the composition is skewed to low complexity; sequence ANNRGRGNNRGRGNSRQNGG. The disordered stretch occupies residues 229 to 267; that stretch reads ANNRGRGNNRGRGNSRQNGGRSRRPRQGQASTQGRGGNN.

The protein belongs to the universal ribosomal protein uS3 family. Part of the 30S ribosomal subunit. Forms a tight complex with proteins S10 and S14.

In terms of biological role, binds the lower part of the 30S subunit head. Binds mRNA in the 70S ribosome, positioning it for translation. This Oenococcus oeni (strain ATCC BAA-331 / PSU-1) protein is Small ribosomal subunit protein uS3.